Consider the following 219-residue polypeptide: Probable GTP-binding protein EngB (219 aa).

The region spanning 31–205 (VGVEIAFAGR…LSILNEWCHP (175 aa)) is the EngB-type G domain. GTP contacts are provided by residues 39 to 46 (GRSNAGKS), 66 to 70 (GRTQL), 84 to 87 (DLPG), 151 to 154 (TKSD), and 184 to 186 (FSA). Positions 46 and 68 each coordinate Mg(2+).

This sequence belongs to the TRAFAC class TrmE-Era-EngA-EngB-Septin-like GTPase superfamily. EngB GTPase family. The cofactor is Mg(2+).

In terms of biological role, necessary for normal cell division and for the maintenance of normal septation. This chain is Probable GTP-binding protein EngB, found in Shewanella sp. (strain MR-7).